The sequence spans 407 residues: Methylthioribose kinase (407 aa).

ATP contacts are provided by residues N40, K57, and 111–113 (EDL). A substrate-binding site is contributed by D229. Residue 246-248 (DAE) participates in ATP binding. R344 contacts substrate.

Belongs to the methylthioribose kinase family. As to quaternary structure, homodimer.

The catalysed reaction is 5-(methylsulfanyl)-D-ribose + ATP = 5-(methylsulfanyl)-alpha-D-ribose 1-phosphate + ADP + H(+). The protein operates within amino-acid biosynthesis; L-methionine biosynthesis via salvage pathway; S-methyl-5-thio-alpha-D-ribose 1-phosphate from S-methyl-5'-thioadenosine (hydrolase route): step 2/2. Its function is as follows. Catalyzes the phosphorylation of methylthioribose into methylthioribose-1-phosphate. The protein is Methylthioribose kinase of Yersinia pseudotuberculosis serotype O:3 (strain YPIII).